The primary structure comprises 205 residues: StAR-related lipid transfer protein 4 (205 aa).

Residues 1–205 enclose the START domain; the sequence is MEGLSDVASF…NFYGDLRKAL (205 aa).

The enzyme catalyses cholesterol(in) = cholesterol(out). In terms of biological role, involved in the intracellular transport of cholesterol. Binds cholesterol or other sterols. This is StAR-related lipid transfer protein 4 (STARD4) from Homo sapiens (Human).